Here is a 1059-residue protein sequence, read N- to C-terminus: Ceruloplasmin (1059 aa).

Positions Met-1 to Thr-19 are cleaved as a signal peptide. 6 consecutive Plastocyanin-like domains span residues Arg-20–Cys-199, Lys-208–Cys-356, His-369–Cys-554, Arg-564–Cys-712, Gly-724–Cys-894, and Phe-902–Glu-1055. 3 residues coordinate Na(+): Tyr-55, Gly-64, and Tyr-67. Cu(2+) is bound by residues His-120 and His-122. His-120 lines the O2 pocket. Lys-128 lines the Ca(2+) pocket. Asn-138 carries N-linked (GlcNAc...) asparagine glycosylation. Ca(2+)-binding residues include Gln-143, Asp-146, and Asp-147. Cysteines 173 and 199 form a disulfide. Residues His-179 and His-181 each contribute to the Cu(2+) site. His-179 contacts O2. Asn-226 carries N-linked (GlcNAc...) asparagine glycosylation. Position 255 (Ser-255) interacts with Na(+). An intrachain disulfide couples Cys-275 to Cys-356. Cu(2+) contacts are provided by His-294, Cys-337, and His-342. An N-linked (GlcNAc...) asparagine glycan is attached at Asn-396. Phe-407, Gly-416, and Tyr-419 together coordinate Na(+). Cys-528 and Cys-554 are disulfide-bonded. N-linked (GlcNAc...) asparagine glycosylation occurs at Asn-582. Ser-611 contacts Na(+). Cys-631 and Cys-712 are disulfide-bonded. Residues His-650, Cys-693, His-698, and Met-703 each contribute to the Cu(2+) site. Cys-693 (nucleophile; for glutathione peroxidase activity) is an active-site residue. An N-linked (GlcNAc...) asparagine glycan is attached at Asn-756. Phe-761, Gly-770, and Tyr-773 together coordinate Na(+). Cys-868 and Cys-894 are oxidised to a cystine. N-linked (GlcNAc...) asparagine glycosylation is present at Asn-920. Ser-949 lines the Na(+) pocket. 8 residues coordinate Cu(2+): His-988, His-991, His-993, His-1033, Cys-1034, His-1035, His-1039, and Met-1044. O2 is bound by residues His-991 and His-993. Residue His-1035 participates in O2 binding.

It belongs to the multicopper oxidase family. As to quaternary structure, found in a complex with MPO and LTF; interacts directly with MPO and LTF, which allows Fe(3+) incorporation into LTF, activation of CP ferroxidase activity and protection of CP antioxidant properties by MPO. Cu(2+) is required as a cofactor. Synthesized in liver and secreted into the plasma. Also choroid plexus, yolk sac, placenta, and testis; not in stomach and small intestine. Fetal lung and liver.

The protein localises to the secreted. It carries out the reaction 4 Fe(2+) + O2 + 4 H(+) = 4 Fe(3+) + 2 H2O. The catalysed reaction is 4 Cu(+) + O2 + 4 H(+) = 4 Cu(2+) + 2 H2O. It catalyses the reaction a hydroperoxide + 2 glutathione = an alcohol + glutathione disulfide + H2O. The enzyme catalyses 4 nitric oxide + O2 + 2 H2O = 4 nitrite + 4 H(+). It carries out the reaction 2 glutathione + H2O2 = glutathione disulfide + 2 H2O. Multifunctional blue, copper-binding (6-7 atoms per molecule) glycoprotein. It has ferroxidase activity oxidizing Fe(2+) to Fe(3+) without releasing radical oxygen species. It is involved in iron transport across the cell membrane. Copper ions provide a large number of enzymatic activites. Oxidizes highly toxic ferrous ions to the ferric state for further incorporation onto apo-transferrins, catalyzes Cu(+) oxidation and promotes the oxidation of biogenic amines such as norepinephrin and serotonin. Provides Cu(2+) ions for the ascorbate-mediated deaminase degradation of the heparan sulfate chains of GPC1. Has glutathione peroxidase-like activity, can remove both hydrogen peroxide and lipid hydroperoxide in the presence of thiols. Also shows NO-oxidase and NO2 synthase activities that determine endocrine NO homeostasis. In Rattus norvegicus (Rat), this protein is Ceruloplasmin (Cp).